The sequence spans 148 residues: Arginine repressor (148 aa).

This sequence belongs to the ArgR family.

It is found in the cytoplasm. Its pathway is amino-acid biosynthesis; L-arginine biosynthesis [regulation]. In terms of biological role, regulates arginine biosynthesis genes. The sequence is that of Arginine repressor from Chlorobium chlorochromatii (strain CaD3).